A 193-amino-acid chain; its full sequence is Molybdenum cofactor guanylyltransferase (193 aa).

GTP is bound by residues 8–10 (LAG), K21, D67, and D98. D98 serves as a coordination point for Mg(2+).

The protein belongs to the MobA family. In terms of assembly, monomer. Requires Mg(2+) as cofactor.

The protein localises to the cytoplasm. The enzyme catalyses Mo-molybdopterin + GTP + H(+) = Mo-molybdopterin guanine dinucleotide + diphosphate. Functionally, transfers a GMP moiety from GTP to Mo-molybdopterin (Mo-MPT) cofactor (Moco or molybdenum cofactor) to form Mo-molybdopterin guanine dinucleotide (Mo-MGD) cofactor. The protein is Molybdenum cofactor guanylyltransferase of Cereibacter sphaeroides (strain ATCC 17029 / ATH 2.4.9) (Rhodobacter sphaeroides).